We begin with the raw amino-acid sequence, 209 residues long: Pyridoxine/pyridoxamine 5'-phosphate oxidase (209 aa).

Substrate-binding positions include 7 to 10 (REDY) and Lys64. FMN is bound by residues 59–64 (RIVLLK), 74–75 (FT), Arg80, and Lys81. Substrate-binding residues include Tyr121, Arg125, and Ser129. FMN contacts are provided by residues 138–139 (QS) and Trp182. 188 to 190 (RLH) is a substrate binding site. Arg192 is a binding site for FMN.

The protein belongs to the pyridoxamine 5'-phosphate oxidase family. As to quaternary structure, homodimer. FMN serves as cofactor.

The catalysed reaction is pyridoxamine 5'-phosphate + O2 + H2O = pyridoxal 5'-phosphate + H2O2 + NH4(+). It carries out the reaction pyridoxine 5'-phosphate + O2 = pyridoxal 5'-phosphate + H2O2. The protein operates within cofactor metabolism; pyridoxal 5'-phosphate salvage; pyridoxal 5'-phosphate from pyridoxamine 5'-phosphate: step 1/1. Its pathway is cofactor metabolism; pyridoxal 5'-phosphate salvage; pyridoxal 5'-phosphate from pyridoxine 5'-phosphate: step 1/1. Its function is as follows. Catalyzes the oxidation of either pyridoxine 5'-phosphate (PNP) or pyridoxamine 5'-phosphate (PMP) into pyridoxal 5'-phosphate (PLP). The protein is Pyridoxine/pyridoxamine 5'-phosphate oxidase of Actinobacillus pleuropneumoniae serotype 3 (strain JL03).